A 120-amino-acid polypeptide reads, in one-letter code: uncharacterized protein (120 aa).

This is an uncharacterized protein from Bacillus subtilis (strain 168).